The following is a 599-amino-acid chain: Elongation factor 4 (599 aa).

The 183-residue stretch at 5 to 187 (SHIRNFSIIA…RLVTVIPAPE (183 aa)) folds into the tr-type G domain. Residues 17 to 22 (DHGKST) and 134 to 137 (NKMD) contribute to the GTP site.

It belongs to the TRAFAC class translation factor GTPase superfamily. Classic translation factor GTPase family. LepA subfamily.

The protein resides in the cell inner membrane. It carries out the reaction GTP + H2O = GDP + phosphate + H(+). In terms of biological role, required for accurate and efficient protein synthesis under certain stress conditions. May act as a fidelity factor of the translation reaction, by catalyzing a one-codon backward translocation of tRNAs on improperly translocated ribosomes. Back-translocation proceeds from a post-translocation (POST) complex to a pre-translocation (PRE) complex, thus giving elongation factor G a second chance to translocate the tRNAs correctly. Binds to ribosomes in a GTP-dependent manner. The sequence is that of Elongation factor 4 from Pseudomonas paraeruginosa (strain DSM 24068 / PA7) (Pseudomonas aeruginosa (strain PA7)).